The following is a 515-amino-acid chain: Cytochrome P450 2D7 (515 aa).

Residues 1–2 (MG) lie on the Extracellular side of the membrane. Residues 3–23 (LEALVPLAMIVAIFLLLVDLM) traverse the membrane as a helical segment. Residues 24–301 (HRHQRWAARY…DENLRIVVGN (278 aa)) lie on the Cytoplasmic side of the membrane. The chain crosses the membrane as a helical span at residues 302–322 (LFLAGMVTTSTTLAWGLLLMI). Over 323–515 (LHLDVQRGRR…SPYELCAVPR (193 aa)) the chain is Extracellular. Asn416 carries N-linked (GlcNAc...) asparagine glycosylation. Heme is bound at residue Cys461.

Belongs to the cytochrome P450 family. Heme serves as cofactor. As to expression, expressed in brain cortex (at protein level).

Its subcellular location is the membrane. The protein localises to the cytoplasm. The protein resides in the mitochondrion. It catalyses the reaction an organic molecule + reduced [NADPH--hemoprotein reductase] + O2 = an alcohol + oxidized [NADPH--hemoprotein reductase] + H2O + H(+). In terms of biological role, may be responsible for the metabolism of many drugs and environmental chemicals that it oxidizes. It may be involved in the metabolism of codeine to morphine. However, another study could not confirm it. The protein is Cytochrome P450 2D7 of Homo sapiens (Human).